Reading from the N-terminus, the 295-residue chain is Proline-rich protein 18 (295 aa).

Over residues Met-1 to Ala-13 the composition is skewed to pro residues. A disordered region spans residues Met-1–Ala-133. The segment covering Pro-14–Ala-29 has biased composition (low complexity). Ser-47 bears the Phosphoserine mark. The residue at position 83 (Arg-83) is an Omega-N-methylarginine. Low complexity predominate over residues Ala-103–Gly-126. Arg-172 is subject to Asymmetric dimethylarginine. A compositionally biased stretch (low complexity) spans Ala-181–Ala-192. Residues Ala-181 to Arg-227 form a disordered region. Omega-N-methylarginine is present on Arg-188.

The polypeptide is Proline-rich protein 18 (PRR18) (Homo sapiens (Human)).